Reading from the N-terminus, the 429-residue chain is Serine--tRNA ligase (429 aa).

An L-serine-binding site is contributed by 235-237 (TAE). 266–268 (RSE) contacts ATP. E289 contributes to the L-serine binding site. An ATP-binding site is contributed by 353–356 (EISS). S389 contributes to the L-serine binding site.

It belongs to the class-II aminoacyl-tRNA synthetase family. Type-1 seryl-tRNA synthetase subfamily. As to quaternary structure, homodimer. The tRNA molecule binds across the dimer.

It localises to the cytoplasm. The enzyme catalyses tRNA(Ser) + L-serine + ATP = L-seryl-tRNA(Ser) + AMP + diphosphate + H(+). The catalysed reaction is tRNA(Sec) + L-serine + ATP = L-seryl-tRNA(Sec) + AMP + diphosphate + H(+). The protein operates within aminoacyl-tRNA biosynthesis; selenocysteinyl-tRNA(Sec) biosynthesis; L-seryl-tRNA(Sec) from L-serine and tRNA(Sec): step 1/1. Catalyzes the attachment of serine to tRNA(Ser). Is also able to aminoacylate tRNA(Sec) with serine, to form the misacylated tRNA L-seryl-tRNA(Sec), which will be further converted into selenocysteinyl-tRNA(Sec). The chain is Serine--tRNA ligase from Haemophilus influenzae (strain PittGG).